A 464-amino-acid chain; its full sequence is Uronate isomerase (464 aa).

The protein belongs to the metallo-dependent hydrolases superfamily. Uronate isomerase family.

The enzyme catalyses D-glucuronate = D-fructuronate. It catalyses the reaction aldehydo-D-galacturonate = keto-D-tagaturonate. Its pathway is carbohydrate metabolism; pentose and glucuronate interconversion. The chain is Uronate isomerase from Caldicellulosiruptor bescii (strain ATCC BAA-1888 / DSM 6725 / KCTC 15123 / Z-1320) (Anaerocellum thermophilum).